Reading from the N-terminus, the 698-residue chain is Polyribonucleotide nucleotidyltransferase (698 aa).

D487 and D493 together coordinate Mg(2+). The KH domain occupies 555–614 (PKIIQIQIDPQKIGDVVGQRGKTINAIIEQTGVKIDINDEGAVSVCGTDKDMMDKAINMI). The region spanning 624 to 692 (GQVFEGKVIS…KMGRISFSIK (69 aa)) is the S1 motif domain.

The protein belongs to the polyribonucleotide nucleotidyltransferase family. Mg(2+) is required as a cofactor.

The protein localises to the cytoplasm. The catalysed reaction is RNA(n+1) + phosphate = RNA(n) + a ribonucleoside 5'-diphosphate. Its function is as follows. Involved in mRNA degradation. Catalyzes the phosphorolysis of single-stranded polyribonucleotides processively in the 3'- to 5'-direction. This Lachnoclostridium phytofermentans (strain ATCC 700394 / DSM 18823 / ISDg) (Clostridium phytofermentans) protein is Polyribonucleotide nucleotidyltransferase.